Here is a 583-residue protein sequence, read N- to C-terminus: Pescadillo (583 aa).

Residues 275–329 (EKLSALSASLARMVASVEEEEAELDHFPTEGEDQEKMEVREKMEQQQSKQKKLFE) are a coiled coil. Residues 323 to 416 (KQKKLFEGLK…IQLPVEEYFL (94 aa)) form the BRCT domain. Disordered regions lie at residues 448-526 (RGEK…EEKA) and 558-583 (ANKL…KKKC). Over residues 455 to 489 (EEDEEEEGEEEEDDEEDEEDDEQSEDEEEAEEEAN) the composition is skewed to acidic residues. Residues 512 to 526 (AKAENRARAAEEEKA) are compositionally biased toward basic and acidic residues.

Belongs to the pescadillo family. Component of the PeBoW complex, composed of bop1, pes1 and wdr12. The complex is held together by bop1, which interacts with pes1 via its N-terminal domain and with wdr12 via a high-affinity interaction between the seven-bladed beta-propeller domains of the 2 proteins. The PeBoW complex associates with the 66S pre-ribosome.

The protein resides in the nucleus. The protein localises to the nucleolus. Its subcellular location is the nucleoplasm. Its function is as follows. Component of the PeBoW complex, which is required for maturation of 28S and 5.8S ribosomal RNAs and formation of the 60S ribosome. The chain is Pescadillo (pes) from Danio rerio (Zebrafish).